A 146-amino-acid chain; its full sequence is Ribosome maturation factor RimP (146 aa).

This sequence belongs to the RimP family.

The protein localises to the cytoplasm. In terms of biological role, required for maturation of 30S ribosomal subunits. This chain is Ribosome maturation factor RimP, found in Helicobacter pylori (strain P12).